Reading from the N-terminus, the 347-residue chain is UPF0284 protein YN1551_0030 (347 aa).

Belongs to the UPF0284 family.

The protein is UPF0284 protein YN1551_0030 of Saccharolobus islandicus (strain Y.N.15.51 / Yellowstone #2) (Sulfolobus islandicus).